The primary structure comprises 2581 residues: Chromodomain-helicase-DNA-binding protein 8 (2581 aa).

Disordered regions lie at residues 22 to 114 (DDSF…QTST), 253 to 283 (VKGSAPAGNPGATGPPLKPAVTLTSTPTQGE), 349 to 392 (QKIQ…SPGQ), 429 to 582 (ALSS…QVKR), and 596 to 615 (DEEEEEVDVTGPIKPEPILP). Composition is skewed to polar residues over residues 42-51 (SLDSLDQMNQ) and 94-114 (DYTTQPASQEQPAQPVLQTST). The segment covering 255-267 (GSAPAGNPGATGP) has biased composition (low complexity). Pro residues predominate over residues 355–370 (PQPPSSQPQPQQPPST). The residue at position 432 (S432) is a Phosphoserine. Basic and acidic residues-rich tracts occupy residues 445–462 (GMEENRRLEHQKKQEKAN) and 493–516 (RPEEEGEKKRRKKSAGERLKEEKP). Residues S553 and S562 each carry the phosphoserine modification. Residues 572–582 (QKRRSNRQVKR) show a composition bias toward basic residues. Residue K609 forms a Glycyl lysine isopeptide (Lys-Gly) (interchain with G-Cter in SUMO) linkage. 2 consecutive Chromo domains span residues 642-709 (AIVD…AQMR) and 724-790 (VEVD…RVNR). One can recognise a Helicase ATP-binding domain in the interval 823 to 997 (LFNWYNRQNC…FSLLHFLEPS (175 aa)). Residue 836 to 843 (DEMGLGKT) coordinates ATP. A DEAH box motif is present at residues 948-951 (DEAH). One can recognise a Helicase C-terminal domain in the interval 1137-1288 (LIDKLLPKLK…KAVLQSMSGR (152 aa)). A phosphoserine mark is found at S1420 and S1424. The disordered stretch occupies residues 1692–1712 (EDPEYKPLQGPPKDQDDEGDP). Residues 1789-2302 (IARREKQQRW…LVELEVECME (514 aa)) form an interaction with FAM124B region. Phosphoserine occurs at positions 1976 and 1978. Residues 1991–2116 (SRTASPLPLR…TDQSRSKLYD (126 aa)) form a disordered region. At T1993 the chain carries Phosphothreonine. Phosphoserine occurs at positions 1995 and 2008. Over residues 2011–2021 (ETATQVPSLES) the composition is skewed to polar residues. A Glycyl lysine isopeptide (Lys-Gly) (interchain with G-Cter in SUMO2) cross-link involves residue K2025. S2046 carries the post-translational modification Phosphoserine. Phosphothreonine is present on T2051. Positions 2064–2073 (EDEDDSDSEL) are enriched in acidic residues. S2069 and S2071 each carry phosphoserine. The segment covering 2076 to 2095 (SKLSPSSSSSSSSSSSSSST) has biased composition (low complexity). Positions 2103–2116 (EEKLTDQSRSKLYD) are enriched in basic and acidic residues. Phosphoserine is present on residues S2182, S2200, and S2202. The disordered stretch occupies residues 2189–2229 (GILGPGNHLLDSPSLTPGEYGDSPVPTPRSSSAASMAEEEA). Position 2204 is a phosphothreonine (T2204). S2211 is modified (phosphoserine). A Phosphothreonine modification is found at T2215. Positions 2218–2229 (SSSAASMAEEEA) are enriched in low complexity. Residue S2223 is modified to Phosphoserine. Residue K2256 forms a Glycyl lysine isopeptide (Lys-Gly) (interchain with G-Cter in SUMO2) linkage. Residues 2481–2581 (PSSPHVDSST…NSDSSEDADD (101 aa)) form a disordered region. Positions 2492-2510 (LHHHHHHPHPHHHHHHHPG) are enriched in basic residues. At S2519 the chain carries Phosphoserine. The segment covering 2519-2528 (SPVTTASGTT) has biased composition (polar residues). Residues 2536–2550 (PEEDDDEDEEDDDDL) show a composition bias toward acidic residues.

It belongs to the SNF2/RAD54 helicase family. CHD8 subfamily. In terms of assembly, interacts with p53/TP53, histone H1, CTNNB1, CTCF and PIAS3. Component of some MLL1/MLL complex, at least composed of the core components KMT2A/MLL1, ASH2L, HCFC1/HCF1, WDR5 and RBBP5, as well as the facultative components BACC1, CHD8, E2F6, HSP70, INO80C, KANSL1, LAS1L, MAX, MCRS1, MGA, KAT8/MOF, PELP1, PHF20, PRP31, RING2, RUVB1/TIP49A, RUVB2/TIP49B, SENP3, TAF1, TAF4, TAF6, TAF7, TAF9 and TEX10. Interacts with CHD7. Interacts with FAM124B. Interacts with TLK2. Interacts with HNRNPL in an RNA-dependent manner. Sumoylated.

Its subcellular location is the nucleus. It carries out the reaction ATP + H2O = ADP + phosphate + H(+). Its function is as follows. ATP-dependent chromatin-remodeling factor, it slides nucleosomes along DNA; nucleosome sliding requires ATP. Acts as a transcription repressor by remodeling chromatin structure and recruiting histone H1 to target genes. Suppresses p53/TP53-mediated apoptosis by recruiting histone H1 and preventing p53/TP53 transactivation activity. Acts as a negative regulator of Wnt signaling pathway by regulating beta-catenin (CTNNB1) activity. Negatively regulates CTNNB1-targeted gene expression by being recruited specifically to the promoter regions of several CTNNB1 responsive genes. Involved in both enhancer blocking and epigenetic remodeling at chromatin boundary via its interaction with CTCF. Acts as a suppressor of STAT3 activity by suppressing the LIF-induced STAT3 transcriptional activity. Also acts as a transcription activator via its interaction with ZNF143 by participating in efficient U6 RNA polymerase III transcription. Regulates alternative splicing of a core group of genes involved in neuronal differentiation, cell cycle and DNA repair. Enables H3K36me3-coupled transcription elongation and co-transcriptional RNA processing likely via interaction with HNRNPL. In Homo sapiens (Human), this protein is Chromodomain-helicase-DNA-binding protein 8.